A 225-amino-acid chain; its full sequence is Probable methylthioribulose-1-phosphate dehydratase (225 aa).

Cys-86 contributes to the substrate binding site. Zn(2+)-binding residues include His-104 and His-106. The Proton donor/acceptor role is filled by Glu-127. His-183 is a Zn(2+) binding site.

It belongs to the aldolase class II family. MtnB subfamily. Requires Zn(2+) as cofactor.

It localises to the cytoplasm. The catalysed reaction is 5-(methylsulfanyl)-D-ribulose 1-phosphate = 5-methylsulfanyl-2,3-dioxopentyl phosphate + H2O. Its pathway is amino-acid biosynthesis; L-methionine biosynthesis via salvage pathway; L-methionine from S-methyl-5-thio-alpha-D-ribose 1-phosphate: step 2/6. Functionally, catalyzes the dehydration of methylthioribulose-1-phosphate (MTRu-1-P) into 2,3-diketo-5-methylthiopentyl-1-phosphate (DK-MTP-1-P). This is Probable methylthioribulose-1-phosphate dehydratase from Leishmania braziliensis.